Consider the following 444-residue polypeptide: tRNA pseudouridine synthase Pus10 (444 aa).

Residue Asp265 is the Nucleophile of the active site. Substrate is bound by residues Tyr333 and Tyr405.

Belongs to the pseudouridine synthase Pus10 family.

It catalyses the reaction uridine(54) in tRNA = pseudouridine(54) in tRNA. The enzyme catalyses uridine(55) in tRNA = pseudouridine(55) in tRNA. Its function is as follows. Responsible for synthesis of pseudouridine from uracil-54 and uracil-55 in the psi GC loop of transfer RNAs. This Thermofilum pendens (strain DSM 2475 / Hrk 5) protein is tRNA pseudouridine synthase Pus10.